Reading from the N-terminus, the 490-residue chain is GTPase Der (490 aa).

EngA-type G domains follow at residues 3–166 and 203–376; these read PVVA…MEDL and IKLA…DSST. GTP contacts are provided by residues 9-16, 56-60, 118-121, 209-216, 256-260, and 321-324; these read GRPNVGKS, DTGGI, NKID, DTAGV, and NKWD. The KH-like domain maps to 377–461; sequence RRVGTSMLTR…PIRIQFKEGE (85 aa).

The protein belongs to the TRAFAC class TrmE-Era-EngA-EngB-Septin-like GTPase superfamily. EngA (Der) GTPase family. In terms of assembly, associates with the 50S ribosomal subunit.

In terms of biological role, GTPase that plays an essential role in the late steps of ribosome biogenesis. The protein is GTPase Der of Shigella boydii serotype 18 (strain CDC 3083-94 / BS512).